A 79-amino-acid chain; its full sequence is D-alanyl carrier protein (79 aa).

Positions 1–77 constitute a Carrier domain; it reads MTVEEKIIDA…KIVEGVKELQ (77 aa). An O-(pantetheine 4'-phosphoryl)serine modification is found at Ser35.

It belongs to the DltC family. Post-translationally, 4'-phosphopantetheine is transferred from CoA to a specific serine of apo-DCP.

Its subcellular location is the cytoplasm. It participates in cell wall biogenesis; lipoteichoic acid biosynthesis. In terms of biological role, carrier protein involved in the D-alanylation of lipoteichoic acid (LTA). The loading of thioester-linked D-alanine onto DltC is catalyzed by D-alanine--D-alanyl carrier protein ligase DltA. The DltC-carried D-alanyl group is further transferred to cell membrane phosphatidylglycerol (PG) by forming an ester bond, probably catalyzed by DltD. D-alanylation of LTA plays an important role in modulating the properties of the cell wall in Gram-positive bacteria, influencing the net charge of the cell wall. This Streptococcus uberis (strain ATCC BAA-854 / 0140J) protein is D-alanyl carrier protein.